The sequence spans 331 residues: FMRFamide-related neuropeptides (331 aa).

The N-terminal stretch at 1-25 (MRCWSPCSLLVVIAIYCLSSHTSEA) is a signal peptide. Positions 26 to 65 (FDLAQACVESQRLSLLPICDTIFAVQQEGAQQSADDGLRS) are excised as a propeptide. Phe71 and Phe83 each carry phenylalanine amide. The propeptide occupies 86–94 (NVPDLPFED). Phenylalanine amide is present on Phe100. The propeptide occupies 103–168 (AAPQLDDLLK…YVDDVEDSDV (66 aa)). Residues 122-153 (QKSDDTSVRRKRSTDAAPQSNTDSAEQKNDSA) form a disordered region. Phenylalanine amide occurs at positions 174 and 181. A propeptide spanning residues 184 to 194 (NPSDVGSKLTE) is cleaved from the precursor. Phenylalanine amide is present on Phe200. The propeptide occupies 203–205 (DPE). Position 211 is a phenylalanine amide (Phe211). The propeptide occupies 214-216 (SDD). Phe222 bears the Phenylalanine amide mark. Positions 225-236 (NPGDAEDELEED) are excised as a propeptide. At Phe242 the chain carries Phenylalanine amide. Positions 245–254 (GDEEDEEEAE) are excised as a propeptide. Residue Phe260 is modified to Phenylalanine amide. The propeptide occupies 263 to 265 (DPE). Phe271 is modified (phenylalanine amide). Positions 274–277 (NGEE) are excised as a propeptide. Position 283 is a phenylalanine amide (Phe283). A propeptide spanning residues 286–293 (NPEEPEAD) is cleaved from the precursor. Position 299 is a phenylalanine amide (Phe299). Residues 302–312 (GGEEDDVNTEE) constitute a propeptide that is removed on maturation. Phenylalanine amide is present on Phe318. A propeptide spanning residues 321 to 331 (SAEKCKGCLEG) is cleaved from the precursor.

The protein belongs to the FARP (FMRFamide related peptide) family. Present ubiquitously in the brain and regions of the central nervous system as well as in the periphery and throughout the dermal chromatophore layer (at protein level).

The protein resides in the secreted. In terms of biological role, excitatory neurotransmitters that directly modulate chromatophore function by activating chromatophore expansion at the chromatophore neuromuscular junction. This is FMRFamide-related neuropeptides from Sepia officinalis (Common cuttlefish).